The primary structure comprises 545 residues: CTP synthase (545 aa).

Positions 1–264 (MQYIVVTGGV…ITRLSKLLNM (264 aa)) are amidoligase domain. Serine 12 contributes to the CTP binding site. UTP is bound at residue serine 12. 13 to 18 (GLGKGT) provides a ligand contact to ATP. Tyrosine 53 contributes to the L-glutamine binding site. Position 70 (aspartate 70) interacts with ATP. Residues aspartate 70 and glutamate 140 each coordinate Mg(2+). CTP contacts are provided by residues 147-149 (DIE), 185-190 (KTKPTQ), and arginine 221. Residues 185 to 190 (KTKPTQ) and arginine 221 each bind UTP. The region spanning 294–527 (YVDLHDAYIS…VEQALIFKHR (234 aa)) is the Glutamine amidotransferase type-1 domain. Glycine 347 provides a ligand contact to L-glutamine. The Nucleophile; for glutamine hydrolysis role is filled by cysteine 374. Residues 375 to 378 (LGFQ), glutamate 398, and arginine 455 contribute to the L-glutamine site. Active-site residues include histidine 500 and glutamate 502.

Belongs to the CTP synthase family. As to quaternary structure, homotetramer.

It catalyses the reaction UTP + L-glutamine + ATP + H2O = CTP + L-glutamate + ADP + phosphate + 2 H(+). It carries out the reaction L-glutamine + H2O = L-glutamate + NH4(+). The enzyme catalyses UTP + NH4(+) + ATP = CTP + ADP + phosphate + 2 H(+). The protein operates within pyrimidine metabolism; CTP biosynthesis via de novo pathway; CTP from UDP: step 2/2. With respect to regulation, allosterically activated by GTP, when glutamine is the substrate; GTP has no effect on the reaction when ammonia is the substrate. The allosteric effector GTP functions by stabilizing the protein conformation that binds the tetrahedral intermediate(s) formed during glutamine hydrolysis. Inhibited by the product CTP, via allosteric rather than competitive inhibition. Functionally, catalyzes the ATP-dependent amination of UTP to CTP with either L-glutamine or ammonia as the source of nitrogen. Regulates intracellular CTP levels through interactions with the four ribonucleotide triphosphates. The chain is CTP synthase from Thermoplasma acidophilum (strain ATCC 25905 / DSM 1728 / JCM 9062 / NBRC 15155 / AMRC-C165).